A 1020-amino-acid chain; its full sequence is Fanconi-associated nuclease 1 (1020 aa).

Residues 1 to 11 (MPSQRKSPDQK) show a composition bias toward basic and acidic residues. Positions 1 to 24 (MPSQRKSPDQKRPRRSLSTSKTAK) are disordered. The D-box signature appears at 14 to 22 (RRSLSTSKT). The segment at 41–69 (KLACSTCHKMVPRYDLIRHLDESCANNGV) adopts a UBZ4-type zinc-finger fold. Zn(2+)-binding residues include cysteine 44, cysteine 47, histidine 59, and cysteine 64. A disordered region spans residues 173–208 (KNEGLASQCPQTSPSTPGTSLTDNCPEMEDKDEVLN). The span at 180 to 195 (QCPQTSPSTPGTSLTD) shows a compositional bias: polar residues. Residues 212 to 214 (KEN) carry the KEN box motif. Residues 224-242 (ENASEQKVKNNKITGDESQ) show a composition bias toward basic and acidic residues. Disordered regions lie at residues 224–252 (ENASEQKVKNNKITGDESQKASCGEPALT) and 269–288 (LVSNTKSSPGDTLVKQESAR). Positions 269-278 (LVSNTKSSPG) are enriched in polar residues. The stretch at 673-737 (SSRAVEVLER…AIRCIREGLA (65 aa)) forms a coiled coil. Positions 837, 963, 978, and 979 each coordinate Mn(2+). The VRR-NUC domain maps to 898–1010 (AESLRAWVGE…GADVEVCHVV (113 aa)).

Belongs to the FAN1 family. In terms of assembly, interacts with FANCD2 (when monoubiquitinated). Interacts with FANCI, MLH1, MLH3 and PMS2. It depends on Mn(2+) as a cofactor. Mg(2+) serves as cofactor. Ubiquitinated and degraded during mitotic exit by the APC/C-Cdh1 complex.

The protein localises to the nucleus. The catalysed reaction is Hydrolytically removes 5'-nucleotides successively from the 3'-hydroxy termini of 3'-hydroxy-terminated oligonucleotides.. Nuclease required for the repair of DNA interstrand cross-links (ICL) recruited at sites of DNA damage by monoubiquitinated FANCD2. Specifically involved in repair of ICL-induced DNA breaks by being required for efficient homologous recombination, probably in the resolution of homologous recombination intermediates. Not involved in DNA double-strand breaks resection. Acts as a 5'-3' exonuclease that anchors at a cut end of DNA and cleaves DNA successively at every third nucleotide, allowing to excise an ICL from one strand through flanking incisions. Probably keeps excising with 3'-flap annealing until it reaches and unhooks the ICL. Acts at sites that have a 5'-terminal phosphate anchor at a nick or a 1- or 2-nucleotide flap and is augmented by a 3' flap. Also has endonuclease activity toward 5'-flaps. In Mus musculus (Mouse), this protein is Fanconi-associated nuclease 1.